The following is a 149-amino-acid chain: Calmodulin (149 aa).

4 EF-hand domains span residues 8–43 (EQISEFKEAFSLFDKDGDGTITTKELGTVMRSLGQN), 44–79 (PTEAELQDMINEVDQDGSGTIDFPEFLTLMARKMQD), 81–116 (DSEEEIKEAFRVFDKDGNGFISAAELRHIMTNLGEK), and 117–149 (LTDEEVDEMIREADVDGDGQINYEEFVKMMMSK). Asp21, Asp23, Asp25, Thr27, Glu32, Asp57, Asp59, Ser61, Thr63, Glu68, Asp94, Asp96, Asn98, and Glu105 together coordinate Ca(2+). Lys116 bears the N6,N6,N6-trimethyllysine mark. Residues Asp130, Asp132, Asp134, Gln136, and Glu141 each contribute to the Ca(2+) site.

It belongs to the calmodulin family.

Its function is as follows. Calmodulin mediates the control of a large number of enzymes, ion channels and other proteins by Ca(2+). Among the enzymes to be stimulated by the calmodulin-Ca(2+) complex are a number of protein kinases and phosphatases. This chain is Calmodulin, found in Trypanosoma brucei brucei.